Consider the following 398-residue polypeptide: Exodeoxyribonuclease 7 large subunit (398 aa).

Belongs to the XseA family. In terms of assembly, heterooligomer composed of large and small subunits.

It localises to the cytoplasm. The catalysed reaction is Exonucleolytic cleavage in either 5'- to 3'- or 3'- to 5'-direction to yield nucleoside 5'-phosphates.. Its function is as follows. Bidirectionally degrades single-stranded DNA into large acid-insoluble oligonucleotides, which are then degraded further into small acid-soluble oligonucleotides. The protein is Exodeoxyribonuclease 7 large subunit of Chlorobaculum tepidum (strain ATCC 49652 / DSM 12025 / NBRC 103806 / TLS) (Chlorobium tepidum).